The following is a 458-amino-acid chain: UDP-N-acetylmuramoylalanine--D-glutamate ligase (458 aa).

An ATP-binding site is contributed by G124 to T130.

It belongs to the MurCDEF family.

The protein resides in the cytoplasm. It carries out the reaction UDP-N-acetyl-alpha-D-muramoyl-L-alanine + D-glutamate + ATP = UDP-N-acetyl-alpha-D-muramoyl-L-alanyl-D-glutamate + ADP + phosphate + H(+). The protein operates within cell wall biogenesis; peptidoglycan biosynthesis. Cell wall formation. Catalyzes the addition of glutamate to the nucleotide precursor UDP-N-acetylmuramoyl-L-alanine (UMA). This Clostridium novyi (strain NT) protein is UDP-N-acetylmuramoylalanine--D-glutamate ligase.